Reading from the N-terminus, the 396-residue chain is MAVQETAAQLSMALKVQEYPTLKVPYETLNKRFRAAQKNIDRETSHVTMVVAELEKTLSSFPVVDTVVSLLDGVVEKLSALKRKAAESIQAEDESAKLCKRRIEHLKEHSSDQPASVNVWKKKRMDRMMVEHLLRCGYYNTAVKLARQSGIEDLVNIEMFLTAKEVEESLERQETATCLAWCHDNKSRLRKMKSCLEFSLRIQEFIELIRQNKRMDAVRHARKHFSQAEGGQLDEVRQVMGMLAFPSDTHISPYKDLLDPARWKMLIQQFRYDNYRLHQLGNNSVFTITLQAGLSAIKTPQCYKEDGTSKNPDCPVCSKSLNKLAQPLPMAHCANSRLVCKISGEVMNENNPPMMLPNGYVYGYNSLLSIRQDDKVICPRTKEVFNFSQAEKVYIM.

One can recognise a LisH domain in the interval 121–153; sequence KKKRMDRMMVEHLLRCGYYNTAVKLARQSGIED. A CTLH domain is found at 159-216; sequence MFLTAKEVEESLERQETATCLAWCHDNKSRLRKMKSCLEFSLRIQEFIELIRQNKRMD. Residues 314–381 form an RING-Gid-type zinc finger; it reads CPVCSKSLNK…QDDKVICPRT (68 aa).

In terms of assembly, identified in the CTLH complex that contains at least MAEA, RMND5A, GID8, WDR26, and RANBP9 and/or RANBP10 as the catalytic core. Interacts with F-actin.

The protein resides in the nucleus matrix. It is found in the cell membrane. It localises to the cytoplasm. Its subcellular location is the cytoskeleton. The enzyme catalyses S-ubiquitinyl-[E2 ubiquitin-conjugating enzyme]-L-cysteine + [acceptor protein]-L-lysine = [E2 ubiquitin-conjugating enzyme]-L-cysteine + N(6)-ubiquitinyl-[acceptor protein]-L-lysine.. Its function is as follows. Core component of the CTLH E3 ubiquitin-protein ligase complex that selectively accepts ubiquitin from UBE2H and mediates ubiquitination and subsequent proteasomal degradation of the transcription factor HBP1. MAEA and RMND5A are both required for catalytic activity of the CTLH E3 ubiquitin-protein ligase complex. MAEA is required for normal cell proliferation. The CTLH E3 ubiquitin-protein ligase complex is not required for the degradation of enzymes involved in gluconeogenesis, such as FBP1. Plays a role in erythroblast maturation and in the development of mature macrophages. Mediates the attachment of erythroid cell to mature macrophages; this MAEA-mediated contact inhibits erythroid cell apoptosis. Participates in erythroblastic island formation, which is the functional unit of definitive erythropoiesis. Associates with F-actin to regulate actin distribution in erythroblasts and macrophages. May contribute to nuclear architecture and cells division events. In Danio rerio (Zebrafish), this protein is E3 ubiquitin-protein transferase MAEA (maea).